Here is a 513-residue protein sequence, read N- to C-terminus: Glycerol-3-phosphate dehydrogenase (513 aa).

16-44 (DVAVIGGGINGVGIAADAAGRGLSVFLCE) contributes to the FAD binding site.

It belongs to the FAD-dependent glycerol-3-phosphate dehydrogenase family. FAD is required as a cofactor.

It is found in the cytoplasm. The enzyme catalyses a quinone + sn-glycerol 3-phosphate = dihydroxyacetone phosphate + a quinol. The chain is Glycerol-3-phosphate dehydrogenase (glpD) from Pseudomonas tolaasii.